Here is a 118-residue protein sequence, read N- to C-terminus: uncharacterized protein (118 aa).

A run of 4 helical transmembrane segments spans residues 12–32 (IISL…FATF), 39–59 (LMPH…SLFI), 63–83 (IIGY…CPTI), and 98–118 (SAHL…VILF).

It localises to the cell membrane. This is an uncharacterized protein from Methanocaldococcus jannaschii (strain ATCC 43067 / DSM 2661 / JAL-1 / JCM 10045 / NBRC 100440) (Methanococcus jannaschii).